Reading from the N-terminus, the 137-residue chain is Large ribosomal subunit protein uL16 (137 aa).

The protein belongs to the universal ribosomal protein uL16 family. In terms of assembly, part of the 50S ribosomal subunit.

In terms of biological role, binds 23S rRNA and is also seen to make contacts with the A and possibly P site tRNAs. The chain is Large ribosomal subunit protein uL16 from Nitrobacter winogradskyi (strain ATCC 25391 / DSM 10237 / CIP 104748 / NCIMB 11846 / Nb-255).